Reading from the N-terminus, the 296-residue chain is Homoserine kinase (296 aa).

84–94 (PLARGLGSSSS) contacts ATP.

The protein belongs to the GHMP kinase family. Homoserine kinase subfamily.

It localises to the cytoplasm. It carries out the reaction L-homoserine + ATP = O-phospho-L-homoserine + ADP + H(+). It participates in amino-acid biosynthesis; L-threonine biosynthesis; L-threonine from L-aspartate: step 4/5. Functionally, catalyzes the ATP-dependent phosphorylation of L-homoserine to L-homoserine phosphate. The sequence is that of Homoserine kinase from Lactococcus lactis subsp. cremoris (strain SK11).